A 297-amino-acid chain; its full sequence is 32 kDa beta-galactoside-binding lectin lec-3 (297 aa).

2 Galectin domains span residues 11 to 142 (YRSK…VQWG) and 151 to 290 (ESGI…IQVV). 224–230 (WGNEERE) contacts a beta-D-galactoside.

Its function is as follows. Binds galactose. The chain is 32 kDa beta-galactoside-binding lectin lec-3 (lec-3) from Caenorhabditis elegans.